The following is a 661-amino-acid chain: Vasorin (661 aa).

Residues 1 to 19 (MWHLLVWIILLATAQQMIT) form the signal peptide. Residues 20–50 (EGCPAGCQCNTPQTVFCLARKNSNFPRSVPP) form the LRRNT domain. Topologically, residues 20 to 563 (EGCPAGCQCN…VTQSQEGNLT (544 aa)) are extracellular. 10 LRR repeats span residues 52–72 (TLNL…SFIG), 75–96 (GLHL…VFRN), 99–120 (NLSN…TFQG), 123–144 (RLER…AFKG), 147–168 (SLLE…SLPH), 169–189 (LLLL…VFNA), 191–212 (NIES…LLSG), 215–237 (NLHE…HGLT), 238–258 (KLNI…LSNL), and 259–281 (PALQ…LFRS). Asparagine 99 carries an N-linked (GlcNAc...) asparagine glycan. The region spanning 293–346 (NPFNCVCSLGWLSEWMRVSGVVLLRPDETRCHFPPKNAGKTLRQLRDSEYGCPA) is the LRRCT domain. Residues 348–385 (TTIQMPSTMPPSTTTGPPTTTKHLQTEAPTTASTTTTT) are compositionally biased toward low complexity. Positions 348-395 (TTIQMPSTMPPSTTTGPPTTTKHLQTEAPTTASTTTTTIPHQEQEEDT) are disordered. One can recognise an EGF-like domain in the interval 403–440 (EDTLCPPQTCLNGGSCHLDPTGQLECECPPGFQGTYCE). 3 cysteine pairs are disulfide-bonded: cysteine 407–cysteine 418, cysteine 412–cysteine 428, and cysteine 430–cysteine 439. Positions 455 to 543 (EQVKIIEVTV…EEDLCTETHT (89 aa)) constitute a Fibronectin type-III domain. N-linked (GlcNAc...) asparagine glycans are attached at residues asparagine 518 and asparagine 561. Residues 564–584 (LVLVPAVAAGILLSAAVAAAA) form a helical membrane-spanning segment. The Cytoplasmic segment spans residues 585–661 (CYARRRKGKG…PTGRLPHSYF (77 aa)). The segment at 591–661 (KGKGHSVEDG…PTGRLPHSYF (71 aa)) is disordered. A compositionally biased stretch (basic and acidic residues) spans 606 to 623 (DGVKKGLDGKGEVKKLSE).

The protein localises to the membrane. In terms of biological role, may act as an inhibitor of TGF-beta signaling. The sequence is that of Vasorin (vasn) from Xenopus tropicalis (Western clawed frog).